An 863-amino-acid polypeptide reads, in one-letter code: DNA mismatch repair protein MutS 2 (863 aa).

626 to 633 is an ATP binding site; the sequence is GPNMSGKS.

The protein belongs to the DNA mismatch repair MutS family.

Functionally, this protein is involved in the repair of mismatches in DNA. It is possible that it carries out the mismatch recognition step. This protein has a weak ATPase activity. The polypeptide is DNA mismatch repair protein MutS 2 (mutS2) (Halobacterium salinarum (strain ATCC 700922 / JCM 11081 / NRC-1) (Halobacterium halobium)).